Consider the following 662-residue polypeptide: ATP-dependent RNA helicase DDX3X (662 aa).

Residue Ser2 is modified to N-acetylserine. The tract at residues 2-139 (SHVAVENALG…KSDEDDWSKP (138 aa)) is required for TBK1 and IKBKE-dependent IFNB1 activation. Residues 12–21 (LDQQFAGLDL) carry the Nuclear export signal motif. Residues 19–144 (LDLNSSDNQS…DWSKPLPPSE (126 aa)) form a disordered region. Polar residues predominate over residues 21-34 (LNSSDNQSGGSTAS). An interaction with EIF4E region spans residues 38-44 (YIPPHLR). Residues 44–68 (RNREATKGFYDKDSSGWSSSKDKDA) show a composition bias toward basic and acidic residues. Lys55 carries the N6-acetyllysine modification. Residues Ser82 and Ser90 each carry the phosphoserine modification. Over residues 94 to 130 (GRFDDRGRGDYDGIGGRGDRSGFGKFERGGNSRWCDK) the composition is skewed to basic and acidic residues. Positions 100-110 (GRGDYDGIGGR) are interaction with IKBKE. An interaction with GSK3B region spans residues 100–662 (GRGDYDGIGG…NSQGVDWWGN (563 aa)). Arg101 is subject to Omega-N-methylarginine. At Tyr104 the chain carries Phosphotyrosine. Arg110 is modified (omega-N-methylarginine). At Lys118 the chain carries N6-acetyllysine. At Ser131 the chain carries Phosphoserine. The interaction with CHUK stretch occupies residues 139–172 (PLPPSERLEQELFSGGNTGINFEKYDDIPVEATG). Positions 180–208 (ESFSDVEMGEIIMGNIELTRYTRPTPVQK) match the Q motif motif. Ser183 carries the phosphoserine modification. 200 to 207 (YTRPTPVQ) serves as a coordination point for ATP. In terms of domain architecture, Helicase ATP-binding spans 211–403 (IPIIKEKRDL…RDFLDEYIFL (193 aa)). A Glycyl lysine isopeptide (Lys-Gly) (interchain with G-Cter in SUMO2) cross-link involves residue Lys215. An ATP-binding site is contributed by 224–231 (AQTGSGKT). The segment at 250 to 259 (ALRAMKENGR) is involved in stimulation of ATPase activity by DNA and RNA, nucleic acid binding and unwinding. The DEAD box signature appears at 347-350 (DEAD). The region spanning 414–575 (NITQKVVWVE…EVPSWLENMA (162 aa)) is the Helicase C-terminal domain. Ser456 is modified (phosphoserine). Residues 536–661 (GNLGLATSFF…YNSQGVDWWG (126 aa)) form an interaction with NXF1 region. Residue Arg592 is modified to Omega-N-methylarginine. Ser594, Ser605, and Ser612 each carry phosphoserine. Positions 601–633 (DYRQSSGASSSSFSSSRASSSRSGGGGHGGSRG) are disordered. Positions 604–622 (QSSGASSSSFSSSRASSSR) are enriched in low complexity. 2 positions are modified to omega-N-methylarginine: Arg617 and Arg632. The segment covering 623–633 (SGGGGHGGSRG) has biased composition (gly residues).

The protein belongs to the DEAD box helicase family. DDX3/DED1 subfamily. In terms of assembly, homodimer; can bind RNA as a monomer and as a dimer/oligomer. Interacts with TDRD3. When phosphorylated, interacts with IRF3; the interaction facilitates the phosphorylation and activation of IRF3 by IKBKE. Directly interacts with XPO1/CRM1. The interaction with XPO1/CMR1 is dependent on the DDX3X nuclear export signal motif and XPO1 interaction with GTPase RAN in its active GTP-bound form. Weakly interacts with TBKBP1/SINTBAD. Directly interacts with TRAF3; this interaction stimulates TRAF3 'Lys-63' ubiquitination. Interacts with CSNK1E in a Wnt-dependent manner; this interaction greatly enhances CSNK1E affinity for ATP, stimulates its kinase activity and promotes CSNK1E-mediated DVL2 phosphorylation. In the presence of RNA, the interaction is decreased. Also interacts with CSNK1D and stimulates its kinase activity. Interacts with TRPV4; this interaction is decreased when the TRPV4 channel is activated, leading to DDX3X relocalization to the nucleus. Interacts with MAP3K14/NIK. Directly interacts with CHUK/IKKA after physiological activation of the TLR7 and TLR8 pathways; this interaction enhances CHUK autophosphorylation. May associate with EIF4F complex, composed of at least EIF4A, EIF4E and EIF4G1/EIF4G3. Directly interacts with EIF4E in an RNA-independent manner; this interaction enhances EIF4E cap-binding ability. Directly interacts with EIF4G1 in an RNA-independent manner. DDX3X competes with EIF4G1 for interaction with EIF4E. Interacts with EIF4A1 and EIF2S1 in an RNA-independent manner. Associates with the eukaryotic translation initiation factor 3 (eIF-3) complex, including with EIF3B and EIF3C subunits. Directly interacts with IKBKE/IKKE; this interaction stimulates IKBKE activating autophosphorylation and is induced upon viral infection. Interacts with TBK1. Interacts with SP1; this interaction potentiates SP1-induced CDKN1A/WAF1/CIP1 transcription. Interacts with GSK3A and GSK3B. Interacts with several death receptors, inclusing FAS, TNFRSF10A and TNFRSF10B. Recruited to TNFRSF10B in the absence of receptor stimulation. When TNFRSF10B is stimulated, further recruited to the receptor and cleaved by caspases. A large proteolytic fragment remains associated with TNFRSF10B. Interacts (via C-terminus) with NXF1/TAP; this interaction may be partly involved in DDX3X nuclear export and in NXF1 localization to stress granules. Identified in an mRNP complex, composed of at least DHX9, DDX3X, ELAVL1, HNRNPU, IGF2BP1/2, ILF3, PABPC1, PCBP2, PTBP2, STAU1, STAU2, SYNCRIP and YBX1. The interaction with IGF2BP1/2 is RNA-dependent. Directly interacts with PABPC1/PABP1 in an RNA-independent manner. This interaction increases in stressed cells and decreases during cell recovery. Interacts (via C-terminus) with MAVS/IPS-1; this interaction potentiates MAVS-mediated IFNB induction. Interacts with ERCC6/CBS. Interacts with DHX33 in an RNA-independent manner. Interacts with DDX5 in the cytoplasm; this interaction may be more efficient when both proteins are unphosphorylated. Interacts with RIGI. Interacts with IFIH1/MDA5. Interacts with NCAPH; this interaction may be important for the NCAPH localization at condensing chromosomes during mitosis. Interacts with NLRP3 (via NACHT domain) under inflammasome-activating conditions. Interacts with CAPRIN1. Interacts with HNF4A and NR0B2/SHP in an RNA-independent manner; this interaction disrupts the interaction between HNF4 and NR0B2 that forms inactive heterodimers and enhances the formation of active HNF4 homodimers. Interacts with CREBBP/CBP. Interacts with EP300/p300. Interacts with gamma-tubulin. Interacts with phosphorylated TP53. Directly interacts with RELA/p65; this interaction may trap RELA in the cytoplasm, impairing nuclear relocalization upon TNF activating signals. Phosphorylated by TBK1; the phosphorylation is required for the synergistic induction of IFNB mediated by TBK1 and DDX3X. Phosphorylated by IKBKE. Also phosphorylated by CSNK1E; this phosphorylation may inhibit RNA-stimulated ATPase activity. Post-translationally, upon stimulation of death receptors, including TNFRSF10B, recruited to receptors and cleaved by caspases. Proteolytic fragments remain associated with the receptors. This cleavage presumably inactivates DDX3X anti-apoptotic function. In terms of processing, ubiquitinated by RNF39 via 'Lys-48'-linked ubiquitination; leading to proteasomal degradation. As to expression, expressed in ovary, including in germinal vesicle immature and metaphase II (MII) stage oocytes (at protein level). In the brain, expressed in the granule cells of the cerebellum and dentate gyrus, the pyramidal cells of the hippocampus, the ependymal cells lining the ventricles, choroid plexi and olfactory bulb. Also accumulates in the thalamic nuclei, the dorsal region of the colliculi and the pontine nucleus.

It is found in the cell membrane. It localises to the nucleus. The protein resides in the cytoplasm. The protein localises to the stress granule. Its subcellular location is the inflammasome. It is found in the cell projection. It localises to the lamellipodium. It catalyses the reaction ATP + H2O = ADP + phosphate + H(+). In terms of biological role, multifunctional ATP-dependent RNA helicase. The ATPase activity can be stimulated by various ribo-and deoxynucleic acids indicative for a relaxed substrate specificity. In vitro can unwind partially double-stranded DNA with a preference for 5'-single-stranded DNA overhangs. Binds RNA G-quadruplex (rG4s) structures, including those located in the 5'-UTR of NRAS mRNA. Involved in many cellular processes, which do not necessarily require its ATPase/helicase catalytic activities. Involved in transcription regulation. Positively regulates CDKN1A/WAF1/CIP1 transcription in an SP1-dependent manner, hence inhibits cell growth. This function requires its ATPase, but not helicase activity. CDKN1A up-regulation may be cell-type specific. Binds CDH1/E-cadherin promoter and represses its transcription. Potentiates HNF4A-mediated MTTP transcriptional activation; this function requires ATPase, but not helicase activity. Facilitates HNF4A acetylation, possibly catalyzed by CREBBP/EP300, thereby increasing the DNA-binding affinity of HNF4 to its response element. In addition, disrupts the interaction between HNF4 and SHP that forms inactive heterodimers and enhances the formation of active HNF4 homodimers. By promoting HNF4A-induced MTTP expression, may play a role in lipid homeostasis. May positively regulate TP53 transcription. Associates with mRNPs, predominantly with spliced mRNAs carrying an exon junction complex (EJC). Involved in the regulation of translation initiation. Not involved in the general process of translation, but promotes efficient translation of selected complex mRNAs, containing highly structured 5'-untranslated regions (UTR). This function depends on helicase activity. Might facilitate translation by resolving secondary structures of 5'-UTRs during ribosome scanning. Alternatively, may act prior to 43S ribosomal scanning and promote 43S pre-initiation complex entry to mRNAs exhibiting specific RNA motifs, by performing local remodeling of transcript structures located close to the cap moiety. Independently of its ATPase activity, promotes the assembly of functional 80S ribosomes and disassembles from ribosomes prior to the translation elongation process. Positively regulates the translation of cyclin E1/CCNE1 mRNA and consequently promotes G1/S-phase transition during the cell cycle. May activate TP53 translation. Required for endoplasmic reticulum stress-induced ATF4 mRNA translation. Independently of its ATPase/helicase activity, enhances IRES-mediated translation; this activity requires interaction with EIF4E. Independently of its ATPase/helicase activity, has also been shown specifically repress cap-dependent translation, possibly by acting on translation initiation factor EIF4E. Involved in innate immunity, acting as a viral RNA sensor. Binds viral RNAs and promotes the production of type I interferon (IFN-alpha and IFN-beta). Potentiate MAVS/RIGI-mediated induction of IFNB in early stages of infection. Enhances IFNB1 expression via IRF3/IRF7 pathway and participates in NFKB activation in the presence of MAVS and TBK1. Involved in TBK1 and IKBKE-dependent IRF3 activation leading to IFNB induction, acts as a scaffolding adapter that links IKBKE and IRF3 and coordinates their activation. Involved in the TLR7/TLR8 signaling pathway leading to type I interferon induction, including IFNA4 production. In this context, acts as an upstream regulator of IRF7 activation by MAP3K14/NIK and CHUK/IKKA. Stimulates CHUK autophosphorylation and activation following physiological activation of the TLR7 and TLR8 pathways, leading to MAP3K14/CHUK-mediated activatory phosphorylation of IRF7. Also stimulates MAP3K14/CHUK-dependent NF-kappa-B signaling. Negatively regulates TNF-induced IL6 and IL8 expression, via the NF-kappa-B pathway. May act by interacting with RELA/p65 and trapping it in the cytoplasm. May also bind IFNB promoter; the function is independent of IRF3. Involved in both stress and inflammatory responses. Independently of its ATPase/helicase activity, required for efficient stress granule assembly through its interaction with EIF4E, hence promotes survival in stressed cells. Independently of its helicase activity, regulates NLRP3 inflammasome assembly through interaction with NLRP3 and hence promotes cell death by pyroptosis during inflammation. This function is independent of helicase activity. Therefore DDX3X availability may be used to interpret stress signals and choose between pro-survival stress granules and pyroptotic NLRP3 inflammasomes and serve as a live-or-die checkpoint in stressed cells. In association with GSK3A/B, negatively regulates extrinsic apoptotic signaling pathway via death domain receptors, including TNFRSF10B, slowing down the rate of CASP3 activation following death receptor stimulation. Cleavage by caspases may inactivate DDX3X and relieve the inhibition. Independently of its ATPase/helicase activity, allosteric activator of CSNK1E. Stimulates CSNK1E-mediated phosphorylation of DVL2, thereby involved in the positive regulation of Wnt/beta-catenin signaling pathway. Also activates CSNK1A1 and CSNK1D in vitro, but it is uncertain if these targets are physiologically relevant. ATPase and casein kinase-activating functions are mutually exclusive. May be involved in mitotic chromosome segregation. This Mus musculus (Mouse) protein is ATP-dependent RNA helicase DDX3X (Ddx3x).